A 41-amino-acid polypeptide reads, in one-letter code: Large ribosomal subunit protein bL36 (41 aa).

Belongs to the bacterial ribosomal protein bL36 family.

The protein is Large ribosomal subunit protein bL36 of Neisseria gonorrhoeae (strain ATCC 700825 / FA 1090).